Here is a 141-residue protein sequence, read N- to C-terminus: Large ribosomal subunit protein uL22 (141 aa).

The tract at residues 110–141 is disordered; the sequence is EEKKTVAKKTTTTKAPAKKTTSTKKATVKKES. The segment covering 117–134 has biased composition (low complexity); it reads KKTTTTKAPAKKTTSTKK.

This sequence belongs to the universal ribosomal protein uL22 family. Part of the 50S ribosomal subunit.

In terms of biological role, this protein binds specifically to 23S rRNA; its binding is stimulated by other ribosomal proteins, e.g. L4, L17, and L20. It is important during the early stages of 50S assembly. It makes multiple contacts with different domains of the 23S rRNA in the assembled 50S subunit and ribosome. Its function is as follows. The globular domain of the protein is located near the polypeptide exit tunnel on the outside of the subunit, while an extended beta-hairpin is found that lines the wall of the exit tunnel in the center of the 70S ribosome. The polypeptide is Large ribosomal subunit protein uL22 (Campylobacter jejuni (strain RM1221)).